The primary structure comprises 178 residues: MAARRIAQSSINWSALAERVPANQKSSFGAFKTKSDIYVRAVLANPECPPQIDWANYKKLVPVAGLVDSFQKQYEALKVPYPQDKVSSQVDAEIKASQSEIDAYKKASEQRIQNYQKEIAHLKSLLPYDQMTMEDYRDAFPDSALDPLNKPTFWPHTPEEQVGYKSKEQLEAEAQGHH.

The tract at residues Asn-149–His-178 is disordered. Basic and acidic residues predominate over residues Lys-165 to His-178.

Belongs to the ATPase d subunit family. F-type ATPases have 2 components, CF(1) - the catalytic core - and CF(0) - the membrane proton channel. CF(0) seems to have nine subunits: a, b, c, d, e, f, g, F6 and 8 (or A6L).

It is found in the mitochondrion. The protein localises to the mitochondrion inner membrane. Mitochondrial membrane ATP synthase (F(1)F(0) ATP synthase or Complex V) produces ATP from ADP in the presence of a proton gradient across the membrane which is generated by electron transport complexes of the respiratory chain. F-type ATPases consist of two structural domains, F(1) - containing the extramembraneous catalytic core, and F(0) - containing the membrane proton channel, linked together by a central stalk and a peripheral stalk. During catalysis, ATP synthesis in the catalytic domain of F(1) is coupled via a rotary mechanism of the central stalk subunits to proton translocation. Part of the complex F(0) domain and the peripheric stalk, which acts as a stator to hold the catalytic alpha(3)beta(3) subcomplex and subunit a/ATP6 static relative to the rotary elements. The protein is ATP synthase subunit d, mitochondrial of Drosophila melanogaster (Fruit fly).